Reading from the N-terminus, the 941-residue chain is Protocadherin alpha-12 (941 aa).

Positions 1 to 29 (MVIIGPRGPGSQRLLLSLLLLAAWEVGSG) are cleaved as a signal peptide. Cadherin domains are found at residues 30–133 (QLHY…PPVF), 134–242 (RERE…GPAF), 243–350 (DKPS…VPEV), 351–455 (MVTS…APAF), 456–565 (AQPE…APAL), and 581–678 (VPRS…APKT). Topologically, residues 30–697 (QLHYSVYEEA…DPEAALVDIN (668 aa)) are extracellular. Residues Asn257 and Asn265 are each glycosylated (N-linked (GlcNAc...) asparagine). Asn548 carries an N-linked (GlcNAc...) asparagine glycan. A helical transmembrane segment spans residues 698 to 718 (VYLIIAICAVSSLLVLTLLLY). Residues 719-941 (TALRCSAPPT…GNSTTDNSDQ (223 aa)) are Cytoplasmic-facing. PXXP repeat units lie at residues 734–737 (PGKP), 790–793 (PRQP), 823–826 (PGGP), 863–866 (GPGN), and 882–885 (PGSP). Residues 734-885 (PGKPTLVCSS…PDKFIIPGSP (152 aa)) are 5 X 4 AA repeats of P-X-X-P. The disordered stretch occupies residues 818–941 (ILRAGPGGPD…GNSTTDNSDQ (124 aa)). Over residues 900–914 (DKSDFITFGKKEETK) the composition is skewed to basic and acidic residues.

The protein localises to the cell membrane. Its function is as follows. Potential calcium-dependent cell-adhesion protein. May be involved in the establishment and maintenance of specific neuronal connections in the brain. The protein is Protocadherin alpha-12 (PCDHA12) of Pan troglodytes (Chimpanzee).